Consider the following 485-residue polypeptide: Glutamyl-tRNA(Gln) amidotransferase subunit A (485 aa).

Active-site charge relay system residues include K78 and S153. The active-site Acyl-ester intermediate is S177.

It belongs to the amidase family. GatA subfamily. Heterotrimer of A, B and C subunits.

It carries out the reaction L-glutamyl-tRNA(Gln) + L-glutamine + ATP + H2O = L-glutaminyl-tRNA(Gln) + L-glutamate + ADP + phosphate + H(+). Allows the formation of correctly charged Gln-tRNA(Gln) through the transamidation of misacylated Glu-tRNA(Gln) in organisms which lack glutaminyl-tRNA synthetase. The reaction takes place in the presence of glutamine and ATP through an activated gamma-phospho-Glu-tRNA(Gln). This Bacillus cereus (strain Q1) protein is Glutamyl-tRNA(Gln) amidotransferase subunit A.